The primary structure comprises 243 residues: Adenylate dimethylallyltransferase (243 aa).

It catalyses the reaction dimethylallyl diphosphate + AMP = N(6)-(dimethylallyl)adenosine 5'-phosphate + diphosphate. Transfers dimethylallyl groups to AMP as part of the biosynthesis of cytokinin phytohormones. The polypeptide is Adenylate dimethylallyltransferase (tzs) (Agrobacterium fabrum (strain C58 / ATCC 33970) (Agrobacterium tumefaciens (strain C58))).